A 236-amino-acid polypeptide reads, in one-letter code: GLIPR1-like protein 1 (236 aa).

A signal peptide spans 1–27 (MALKKKLNFLWTLVLYLIASRLPKAFG). The region spanning 46–178 (LNIHNELRRK…FSAGLFVCNY (133 aa)) is the SCP domain. Asparagine 126 carries an N-linked (GlcNAc...) asparagine glycan.

Belongs to the CRISP family. As to quaternary structure, part of a oolemmal binding multimeric complex (IZUMO1 complex) composed at least of IZUMO1 and GLIPR1L1; the complex assemblage is influenced by the maturation status of the male germ cell. Interacts with IZUMO1. In terms of processing, N-glycosylated. N-glycosylation decreases during the transit in the caput. In terms of tissue distribution, expressed in testis (at protein level). Little or no expression in other tissues tested.

It localises to the cytoplasmic vesicle. The protein resides in the secretory vesicle. The protein localises to the acrosome. Its subcellular location is the cell membrane. It is found in the membrane raft. It localises to the secreted. In terms of biological role, required for optimal fertilization at the stage of sperm-oocyte fusion, plays a role in optimizing acrosome function, the translocation of IZUMO1 during the acrosome reaction and the fertilization process. Component of epididymosomes, one type of membranous microvesicules which mediate the transfer of lipids and proteins to spermatozoa plasma membrane during epididymal maturation. Also component of the CD9-positive microvesicules found in the cauda region. This Mus musculus (Mouse) protein is GLIPR1-like protein 1.